The primary structure comprises 204 residues: Small ribosomal subunit protein uS4 (204 aa).

The interval 1-49 (MSKRKSAKYKLDRRMGENIWGRPNSPVNKRSYGPGQHGQRRKGKTSDFG) is disordered. One can recognise an S4 RNA-binding domain in the interval 94 to 154 (QRLDMVVYRA…NKAKEMALVI (61 aa)).

This sequence belongs to the universal ribosomal protein uS4 family. As to quaternary structure, part of the 30S ribosomal subunit. Contacts protein S5. The interaction surface between S4 and S5 is involved in control of translational fidelity.

In terms of biological role, one of the primary rRNA binding proteins, it binds directly to 16S rRNA where it nucleates assembly of the body of the 30S subunit. Its function is as follows. With S5 and S12 plays an important role in translational accuracy. This chain is Small ribosomal subunit protein uS4, found in Erythrobacter litoralis (strain HTCC2594).